We begin with the raw amino-acid sequence, 313 residues long: Formimidoylglutamase (313 aa).

Mn(2+) is bound by residues His-130, Asp-155, His-157, Asp-159, Asp-241, and Asp-243.

The protein belongs to the arginase family. Mn(2+) serves as cofactor.

The catalysed reaction is N-formimidoyl-L-glutamate + H2O = formamide + L-glutamate. Its pathway is amino-acid degradation; L-histidine degradation into L-glutamate; L-glutamate from N-formimidoyl-L-glutamate (hydrolase route): step 1/1. Functionally, catalyzes the conversion of N-formimidoyl-L-glutamate to L-glutamate and formamide. This chain is Formimidoylglutamase, found in Salmonella choleraesuis (strain SC-B67).